A 548-amino-acid chain; its full sequence is ATP synthase subunit alpha (548 aa).

172-179 is a binding site for ATP; it reads GDRKTGKT. Residues 526 to 548 are disordered; the sequence is AEAMDEADVEKESVKVRKPAPKK.

The protein belongs to the ATPase alpha/beta chains family. As to quaternary structure, F-type ATPases have 2 components, CF(1) - the catalytic core - and CF(0) - the membrane proton channel. CF(1) has five subunits: alpha(3), beta(3), gamma(1), delta(1), epsilon(1). CF(0) has three main subunits: a(1), b(2) and c(9-12). The alpha and beta chains form an alternating ring which encloses part of the gamma chain. CF(1) is attached to CF(0) by a central stalk formed by the gamma and epsilon chains, while a peripheral stalk is formed by the delta and b chains.

It is found in the cell membrane. It catalyses the reaction ATP + H2O + 4 H(+)(in) = ADP + phosphate + 5 H(+)(out). Produces ATP from ADP in the presence of a proton gradient across the membrane. The alpha chain is a regulatory subunit. The sequence is that of ATP synthase subunit alpha from Mycolicibacterium vanbaalenii (strain DSM 7251 / JCM 13017 / BCRC 16820 / KCTC 9966 / NRRL B-24157 / PYR-1) (Mycobacterium vanbaalenii).